The primary structure comprises 648 residues: tRNA 5-methylaminomethyl-2-thiouridine biosynthesis bifunctional protein MnmC (648 aa).

Residues 1-228 (MTDRLVPASL…VDDLLVGEYA (228 aa)) form a tRNA (mnm(5)s(2)U34)-methyltransferase region. The interval 252–648 (IGAGLAGCAV…LRARRVGRAG (397 aa)) is FAD-dependent cmnm(5)s(2)U34 oxidoreductase.

This sequence in the N-terminal section; belongs to the methyltransferase superfamily. tRNA (mnm(5)s(2)U34)-methyltransferase family. In the C-terminal section; belongs to the DAO family. FAD serves as cofactor.

It is found in the cytoplasm. It carries out the reaction 5-aminomethyl-2-thiouridine(34) in tRNA + S-adenosyl-L-methionine = 5-methylaminomethyl-2-thiouridine(34) in tRNA + S-adenosyl-L-homocysteine + H(+). Catalyzes the last two steps in the biosynthesis of 5-methylaminomethyl-2-thiouridine (mnm(5)s(2)U) at the wobble position (U34) in tRNA. Catalyzes the FAD-dependent demodification of cmnm(5)s(2)U34 to nm(5)s(2)U34, followed by the transfer of a methyl group from S-adenosyl-L-methionine to nm(5)s(2)U34, to form mnm(5)s(2)U34. In Burkholderia lata (strain ATCC 17760 / DSM 23089 / LMG 22485 / NCIMB 9086 / R18194 / 383), this protein is tRNA 5-methylaminomethyl-2-thiouridine biosynthesis bifunctional protein MnmC.